The primary structure comprises 462 residues: SET domain-containing protein SmydA-8, isoform A (462 aa).

The SET domain maps to 55-287; it reads PNWTISSSTV…KGGEITTTYT (233 aa).

It belongs to the class V-like SAM-binding methyltransferase superfamily.

The chain is SET domain-containing protein SmydA-8, isoform A from Drosophila melanogaster (Fruit fly).